The primary structure comprises 270 residues: Putative pyruvate, phosphate dikinase regulatory protein (270 aa).

Residue 153–160 (GVSRTSKT) coordinates ADP.

It belongs to the pyruvate, phosphate/water dikinase regulatory protein family. PDRP subfamily.

The enzyme catalyses N(tele)-phospho-L-histidyl/L-threonyl-[pyruvate, phosphate dikinase] + ADP = N(tele)-phospho-L-histidyl/O-phospho-L-threonyl-[pyruvate, phosphate dikinase] + AMP + H(+). The catalysed reaction is N(tele)-phospho-L-histidyl/O-phospho-L-threonyl-[pyruvate, phosphate dikinase] + phosphate + H(+) = N(tele)-phospho-L-histidyl/L-threonyl-[pyruvate, phosphate dikinase] + diphosphate. In terms of biological role, bifunctional serine/threonine kinase and phosphorylase involved in the regulation of the pyruvate, phosphate dikinase (PPDK) by catalyzing its phosphorylation/dephosphorylation. This is Putative pyruvate, phosphate dikinase regulatory protein from Halalkalibacterium halodurans (strain ATCC BAA-125 / DSM 18197 / FERM 7344 / JCM 9153 / C-125) (Bacillus halodurans).